Reading from the N-terminus, the 134-residue chain is U-scoloptoxin(05)-Er2a (134 aa).

The first 19 residues, 1–19 (MTFVVAAVVLLTVVPLATP), serve as a signal peptide directing secretion.

It belongs to the scoloptoxin-05 family. Contains 5 disulfide bonds. In terms of tissue distribution, expressed by the venom gland.

It is found in the secreted. The sequence is that of U-scoloptoxin(05)-Er2a from Ethmostigmus rubripes (Giant centipede).